The primary structure comprises 353 residues: MSDALLKVESLTKHYPIEAGWFKTNVPVVRAVEDVSFTVQAGETLCVVGESGCGKSTLARLLMRLIDPTSGRVLVEGTDIAGLRKNELRAWRRRMQMVFQDPYSSLNPRLTAGQIITEPVENFECLSRRQRQELATDLLRKVGMSPEMASRYPSEMSGGQRQRLGIARALALKPSLIIADEAVSALDVSVQAQILNLLMDLQQETGIALIFISHDLAVVEHIGHRVAVMYLGRIVELSPRDALFAKPVHPYTEALIAAAPVPDPARARLEVPLEGEVPSPVNPPSGCAFHPRCPLAVDRCRAEVPPLVPMPDGRAVACHVRAPAAAAHISPSALASLALPKTVQPGGTILARR.

The 251-residue stretch at 6 to 256 folds into the ABC transporter domain; it reads LKVESLTKHY…PVHPYTEALI (251 aa). ATP is bound at residue 49–56; it reads GESGCGKS.

The protein belongs to the ABC transporter superfamily.

The protein resides in the cell inner membrane. In terms of biological role, probably part of a binding-protein-dependent transport system y4tOPQRS for a peptide. Probably responsible for energy coupling to the transport system. The polypeptide is Probable peptide ABC transporter ATP-binding protein y4tS (Sinorhizobium fredii (strain NBRC 101917 / NGR234)).